Here is a 403-residue protein sequence, read N- to C-terminus: Creatinase (403 aa).

Residue His-232 is part of the active site.

It belongs to the peptidase M24 family. Creatinase subfamily. In terms of assembly, homodimer.

The enzyme catalyses creatine + H2O = sarcosine + urea. This chain is Creatinase, found in Flavobacterium sp. (strain U-188).